The chain runs to 236 residues: Purine nucleoside phosphorylase DeoD-type (236 aa).

His-5 contributes to the a purine D-ribonucleoside binding site. Residues Gly-21, Arg-25, Arg-44, and 88–91 (RVGT) contribute to the phosphate site. A purine D-ribonucleoside is bound by residues 180–182 (EME) and 204–205 (SD). Asp-205 serves as the catalytic Proton donor.

This sequence belongs to the PNP/UDP phosphorylase family. Homohexamer; trimer of homodimers.

The enzyme catalyses a purine D-ribonucleoside + phosphate = a purine nucleobase + alpha-D-ribose 1-phosphate. It catalyses the reaction a purine 2'-deoxy-D-ribonucleoside + phosphate = a purine nucleobase + 2-deoxy-alpha-D-ribose 1-phosphate. Its function is as follows. Catalyzes the reversible phosphorolytic breakdown of the N-glycosidic bond in the beta-(deoxy)ribonucleoside molecules, with the formation of the corresponding free purine bases and pentose-1-phosphate. The protein is Purine nucleoside phosphorylase DeoD-type of Shewanella amazonensis (strain ATCC BAA-1098 / SB2B).